We begin with the raw amino-acid sequence, 283 residues long: Malonyl-[acyl-carrier protein] O-methyltransferase (283 aa).

The protein belongs to the methyltransferase superfamily.

The enzyme catalyses malonyl-[ACP] + S-adenosyl-L-methionine = malonyl-[ACP] methyl ester + S-adenosyl-L-homocysteine. It functions in the pathway cofactor biosynthesis; biotin biosynthesis. Its function is as follows. Converts the free carboxyl group of a malonyl-thioester to its methyl ester by transfer of a methyl group from S-adenosyl-L-methionine (SAM). It allows to synthesize pimeloyl-ACP via the fatty acid synthetic pathway. In Acetivibrio thermocellus (strain ATCC 27405 / DSM 1237 / JCM 9322 / NBRC 103400 / NCIMB 10682 / NRRL B-4536 / VPI 7372) (Clostridium thermocellum), this protein is Malonyl-[acyl-carrier protein] O-methyltransferase.